A 233-amino-acid polypeptide reads, in one-letter code: Segregation and condensation protein A (233 aa).

The protein belongs to the ScpA family. Component of a cohesin-like complex composed of ScpA, ScpB and the Smc homodimer, in which ScpA and ScpB bind to the head domain of Smc. The presence of the three proteins is required for the association of the complex with DNA.

The protein resides in the cytoplasm. Participates in chromosomal partition during cell division. May act via the formation of a condensin-like complex containing Smc and ScpB that pull DNA away from mid-cell into both cell halves. This chain is Segregation and condensation protein A, found in Streptococcus pyogenes serotype M1.